We begin with the raw amino-acid sequence, 574 residues long: 2-succinyl-5-enolpyruvyl-6-hydroxy-3-cyclohexene-1-carboxylate synthase (574 aa).

This sequence belongs to the TPP enzyme family. MenD subfamily. As to quaternary structure, homodimer. It depends on Mg(2+) as a cofactor. Mn(2+) is required as a cofactor. The cofactor is thiamine diphosphate.

It catalyses the reaction isochorismate + 2-oxoglutarate + H(+) = 5-enolpyruvoyl-6-hydroxy-2-succinyl-cyclohex-3-ene-1-carboxylate + CO2. It functions in the pathway quinol/quinone metabolism; 1,4-dihydroxy-2-naphthoate biosynthesis; 1,4-dihydroxy-2-naphthoate from chorismate: step 2/7. It participates in quinol/quinone metabolism; menaquinone biosynthesis. Catalyzes the thiamine diphosphate-dependent decarboxylation of 2-oxoglutarate and the subsequent addition of the resulting succinic semialdehyde-thiamine pyrophosphate anion to isochorismate to yield 2-succinyl-5-enolpyruvyl-6-hydroxy-3-cyclohexene-1-carboxylate (SEPHCHC). This is 2-succinyl-5-enolpyruvyl-6-hydroxy-3-cyclohexene-1-carboxylate synthase from Rubrobacter xylanophilus (strain DSM 9941 / JCM 11954 / NBRC 16129 / PRD-1).